The following is an 831-amino-acid chain: Multiphosphoryl transfer protein (831 aa).

The HPr domain maps to 1-90 (MLTIQFLCPL…EYIQVRFIDS (90 aa)). The Pros-phosphohistidine intermediate; for HPr activity role is filled by His15. His15 carries the phosphohistidine; by EI modification. The PTS EI stretch occupies residues 119–650 (GNVLASGVGV…AVKSQLRQLD (532 aa)). His298 (tele-phosphohistidine intermediate; for PTS EI activity) is an active-site residue. His298 carries the post-translational modification Phosphohistidine; by autocatalysis. The phosphoenolpyruvate site is built by Arg405 and Arg441. The Mg(2+) site is built by Glu540 and Asp564. Phosphoenolpyruvate-binding positions include 563-564 (ND) and Arg574. Cys611 functions as the Proton donor; for EI activity in the catalytic mechanism. Residues 685 to 828 (PLLALENIFV…QSILTLLETE (144 aa)) enclose the PTS EIIA type-2 domain. Residue His747 is the Tele-phosphohistidine intermediate; for PTS EIIA activity of the active site. A Phosphohistidine; by HPr modification is found at His747.

This sequence belongs to the PEP-utilizing enzyme family. Mg(2+) serves as cofactor.

It is found in the cytoplasm. It catalyses the reaction L-histidyl-[protein] + phosphoenolpyruvate = N(pros)-phospho-L-histidyl-[protein] + pyruvate. The catalysed reaction is D-fructose(out) + N(pros)-phospho-L-histidyl-[protein] = D-fructose 1-phosphate(in) + L-histidyl-[protein]. Its function is as follows. Multifunctional protein that includes general (non sugar-specific) and sugar-specific components of the phosphoenolpyruvate-dependent sugar phosphotransferase system (sugar PTS). This major carbohydrate active transport system catalyzes the phosphorylation of incoming sugar substrates concomitantly with their translocation across the cell membrane. The enzyme II FryABC PTS system is involved in fructose transport. In Escherichia coli O157:H7, this protein is Multiphosphoryl transfer protein (fryA).